A 104-amino-acid polypeptide reads, in one-letter code: L-rhamnose mutarotase (104 aa).

A substrate-binding site is contributed by Y18. Catalysis depends on H22, which acts as the Proton donor. Substrate is bound by residues Y41 and W76–W77.

Belongs to the rhamnose mutarotase family. Homodimer.

Its subcellular location is the cytoplasm. It carries out the reaction alpha-L-rhamnose = beta-L-rhamnose. It participates in carbohydrate metabolism; L-rhamnose metabolism. Functionally, involved in the anomeric conversion of L-rhamnose. The protein is L-rhamnose mutarotase of Cronobacter sakazakii (strain ATCC BAA-894) (Enterobacter sakazakii).